We begin with the raw amino-acid sequence, 1177 residues long: Lysylphosphatidylglycerol biosynthesis bifunctional protein LysX (1177 aa).

Disordered stretches follow at residues Met1–Val40 and Val61–Arg85. The phosphatidylglycerol lysyltransferase stretch occupies residues Met1–Asp676. Low complexity predominate over residues Ser65–Arg85. 6 helical membrane passes run Val93–Val113, Phe135–Ala155, Ile159–Ile179, Ile189–Ala209, Ala227–Phe247, and Val281–Val301. The disordered stretch occupies residues Ser673 to Arg693. Positions Val677–His1177 are lysine--tRNA ligase. A compositionally biased stretch (basic and acidic residues) spans Arg681–Arg693. The OB DNA-binding region spans Ile738–Ile816. Mg(2+) contacts are provided by Asp1089 and Glu1096.

In the N-terminal section; belongs to the LPG synthetase family. The protein in the C-terminal section; belongs to the class-II aminoacyl-tRNA synthetase family. The cofactor is Mg(2+).

The protein resides in the cell membrane. It catalyses the reaction tRNA(Lys) + L-lysine + ATP = L-lysyl-tRNA(Lys) + AMP + diphosphate. The catalysed reaction is L-lysyl-tRNA(Lys) + a 1,2-diacyl-sn-glycero-3-phospho-(1'-sn-glycerol) = a 1,2-diacyl-sn-glycero-3-phospho-1'-(3'-O-L-lysyl)-sn-glycerol + tRNA(Lys). In terms of biological role, catalyzes the production of L-lysyl-tRNA(Lys)transfer and the transfer of a lysyl group from L-lysyl-tRNA(Lys) to membrane-bound phosphatidylglycerol (PG), which produces lysylphosphatidylglycerol (LPG), one of the components of the bacterial membrane with a positive net charge. LPG synthesis contributes to the resistance to cationic antimicrobial peptides (CAMPs) and likely protects M.tuberculosis against the CAMPs produced by competiting microorganisms (bacteriocins). In fact, the modification of anionic phosphatidylglycerol with positively charged L-lysine results in repulsion of the peptides. The sequence is that of Lysylphosphatidylglycerol biosynthesis bifunctional protein LysX (lysX) from Mycolicibacterium paratuberculosis (strain ATCC BAA-968 / K-10) (Mycobacterium paratuberculosis).